A 431-amino-acid chain; its full sequence is Protein prenyltransferase alpha subunit repeat-containing protein 1-B (431 aa).

PFTA repeat units follow at residues 85-118, 120-153, 178-211, 217-250, and 293-326; these read ELIDVTCTLLLLNPDFTTAWNVRKELIQSGTLNP, KDLQLGKLALTKFPKSPETWIHRRWVLQRVVQEL, EEMHVCYEAAGRYPSNYNSWSHRIWVIQHLGNLN, DELSSTKHWVSMHVSDHSGFHYRQFLLKSLLCKT, and EEMKLNRELLDSYPGHETLWCHRRQIFKLIHQLL. The segment at 363–383 is disordered; the sequence is PMDVDGMSDPNKQGYTQETKR. Residues 394–431 form a PFTA 6 repeat; it reads SLDSELRFINCVLTNCCSPEQSRFAASYRKWLLSLQGY.

This sequence belongs to the protein prenyltransferase subunit alpha family.

The polypeptide is Protein prenyltransferase alpha subunit repeat-containing protein 1-B (ptar1-b) (Xenopus laevis (African clawed frog)).